A 985-amino-acid polypeptide reads, in one-letter code: UPF0182 protein cgR_0895 (985 aa).

7 consecutive transmembrane segments (helical) span residues 19–39 (VTWIFAIIALIILIAPMSVGF), 63–83 (IVLFVIFALIAGFVTWLAGYF), 115–135 (VMVLIPIFVALLAGLIGQRSW), 176–196 (SMMLIVAFLIALVGHYLMGGI), 215–235 (TQLAVTAGLWMLVKVAGYWLD), 262–282 (KIILLVIALFVAIAFFSAIFL), and 290–310 (LAVVLMLLSSVIIGAAWPLML). The interval 906-944 (AQDIEEVDGTTTTPSTDETDTDTDQPATETPTAPVSEAE) is disordered. The span at 929–939 (DQPATETPTAP) shows a compositional bias: low complexity.

It belongs to the UPF0182 family.

It is found in the cell membrane. The protein is UPF0182 protein cgR_0895 of Corynebacterium glutamicum (strain R).